A 274-amino-acid chain; its full sequence is Nitrogenase iron protein (274 aa).

8 to 15 (GKGGIGKS) contributes to the ATP binding site. Cysteine 94 is a [4Fe-4S] cluster binding site. ADP-ribosylarginine; by dinitrogenase reductase ADP-ribosyltransferase is present on arginine 97. Cysteine 131 is a [4Fe-4S] cluster binding site.

The protein belongs to the NifH/BchL/ChlL family. As to quaternary structure, homodimer. Requires [4Fe-4S] cluster as cofactor. Post-translationally, the reversible ADP-ribosylation of Arg-97 inactivates the nitrogenase reductase and regulates nitrogenase activity.

It catalyses the reaction N2 + 8 reduced [2Fe-2S]-[ferredoxin] + 16 ATP + 16 H2O = H2 + 8 oxidized [2Fe-2S]-[ferredoxin] + 2 NH4(+) + 16 ADP + 16 phosphate + 6 H(+). Functionally, the key enzymatic reactions in nitrogen fixation are catalyzed by the nitrogenase complex, which has 2 components: the iron protein and the molybdenum-iron protein. This is Nitrogenase iron protein from Prosthecochloris aestuarii (strain DSM 271 / SK 413).